The primary structure comprises 348 residues: VIP36-like protein (348 aa).

The N-terminal stretch at 1–38 (MAVALGPSGWWQRWRRRLSAREVSRMLLLLLLLGSGQG) is a signal peptide. At 39–313 (PRQVGAGQTF…APLPPLSGLA (275 aa)) the chain is on the lumenal side. Residues 49-274 (EYLKREHSLS…DVISLKLFEL (226 aa)) form the L-type lectin-like domain. Residues Ser-93 and Asp-128 each contribute to the a carbohydrate site. Residues Asp-159, Tyr-161, and Asn-163 each contribute to the Ca(2+) site. Residues Tyr-161 and Asn-163 each contribute to the a carbohydrate site. N-linked (GlcNAc...) asparagine glycosylation is present at Asn-181. His-188 lines the a carbohydrate pocket. Asp-191 is a Ca(2+) binding site. Cysteines 200 and 237 form a disulfide. Position 258-260 (258-260 (GDL)) interacts with a carbohydrate. Residues 314–334 (LFLIVFFSLVFSVFAIVIGII) traverse the membrane as a helical segment. Residues 335–348 (LYNKWQDQSRKRFY) are Cytoplasmic-facing. Positions 344–346 (RKR) match the Endoplasmic reticulum retention signal motif.

The protein resides in the endoplasmic reticulum membrane. It is found in the golgi apparatus membrane. May be involved in the regulation of export from the endoplasmic reticulum of a subset of glycoproteins. May function as a regulator of ERGIC-53. The chain is VIP36-like protein (LMAN2L) from Bos taurus (Bovine).